Here is a 546-residue protein sequence, read N- to C-terminus: CTP synthase (546 aa).

Residues 1 to 267 are amidoligase domain; the sequence is MTKFIFVTGG…AEQVLDILQL (267 aa). Ser-13 is a binding site for CTP. Position 13 (Ser-13) interacts with UTP. An ATP-binding site is contributed by 14–19; the sequence is SIGKGI. Tyr-54 contacts L-glutamine. Residue Asp-71 coordinates ATP. Residues Asp-71 and Glu-141 each coordinate Mg(2+). CTP is bound by residues 148-150, 188-193, and Lys-224; these read DIE and KTKPTQ. UTP is bound by residues 188–193 and Lys-224; that span reads KTKPTQ. The Glutamine amidotransferase type-1 domain maps to 292-534; it reads EVAIVGKYVR…IKAALGSDLT (243 aa). Gly-354 serves as a coordination point for L-glutamine. The active-site Nucleophile; for glutamine hydrolysis is Cys-381. Residues 382-385, Glu-405, and Arg-462 contribute to the L-glutamine site; that span reads LGMQ. Active-site residues include His-507 and Glu-509.

This sequence belongs to the CTP synthase family. In terms of assembly, homotetramer.

The catalysed reaction is UTP + L-glutamine + ATP + H2O = CTP + L-glutamate + ADP + phosphate + 2 H(+). The enzyme catalyses L-glutamine + H2O = L-glutamate + NH4(+). It carries out the reaction UTP + NH4(+) + ATP = CTP + ADP + phosphate + 2 H(+). Its pathway is pyrimidine metabolism; CTP biosynthesis via de novo pathway; CTP from UDP: step 2/2. Its activity is regulated as follows. Allosterically activated by GTP, when glutamine is the substrate; GTP has no effect on the reaction when ammonia is the substrate. The allosteric effector GTP functions by stabilizing the protein conformation that binds the tetrahedral intermediate(s) formed during glutamine hydrolysis. Inhibited by the product CTP, via allosteric rather than competitive inhibition. In terms of biological role, catalyzes the ATP-dependent amination of UTP to CTP with either L-glutamine or ammonia as the source of nitrogen. Regulates intracellular CTP levels through interactions with the four ribonucleotide triphosphates. The protein is CTP synthase of Synechococcus sp. (strain ATCC 27144 / PCC 6301 / SAUG 1402/1) (Anacystis nidulans).